Here is a 52-residue protein sequence, read N- to C-terminus: Eukaryotic translation initiation factor 5A (52 aa).

K42 carries the post-translational modification Hypusine.

It belongs to the eIF-5A family. Lys-42 undergoes hypusination, a unique post-translational modification that consists in the addition of a butylamino group from spermidine to lysine side chain, leading to the formation of the unusual amino acid hypusine. eIF-5As are the only known proteins to undergo this modification, which is essential for their function.

It is found in the cytoplasm. In terms of biological role, translation factor that promotes translation elongation and termination, particularly upon ribosome stalling at specific amino acid sequence contexts. Binds between the exit (E) and peptidyl (P) site of the ribosome and promotes rescue of stalled ribosome: specifically required for efficient translation of polyproline-containing peptides as well as other motifs that stall the ribosome. Acts as a ribosome quality control (RQC) cofactor by joining the RQC complex to facilitate peptidyl transfer during CAT tailing step. The sequence is that of Eukaryotic translation initiation factor 5A from Schistosoma mansoni (Blood fluke).